A 323-amino-acid chain; its full sequence is Methionyl-tRNA formyltransferase (323 aa).

Residue 118–121 (SLLP) participates in (6S)-5,6,7,8-tetrahydrofolate binding.

It belongs to the Fmt family.

It catalyses the reaction L-methionyl-tRNA(fMet) + (6R)-10-formyltetrahydrofolate = N-formyl-L-methionyl-tRNA(fMet) + (6S)-5,6,7,8-tetrahydrofolate + H(+). Its function is as follows. Attaches a formyl group to the free amino group of methionyl-tRNA(fMet). The formyl group appears to play a dual role in the initiator identity of N-formylmethionyl-tRNA by promoting its recognition by IF2 and preventing the misappropriation of this tRNA by the elongation apparatus. The polypeptide is Methionyl-tRNA formyltransferase (Buchnera aphidicola subsp. Baizongia pistaciae (strain Bp)).